Here is a 205-residue protein sequence, read N- to C-terminus: dTTP/UTP pyrophosphatase (205 aa).

Aspartate 66 functions as the Proton acceptor in the catalytic mechanism.

This sequence belongs to the Maf family. YhdE subfamily. It depends on a divalent metal cation as a cofactor.

Its subcellular location is the cytoplasm. The enzyme catalyses dTTP + H2O = dTMP + diphosphate + H(+). It catalyses the reaction UTP + H2O = UMP + diphosphate + H(+). Nucleoside triphosphate pyrophosphatase that hydrolyzes dTTP and UTP. May have a dual role in cell division arrest and in preventing the incorporation of modified nucleotides into cellular nucleic acids. The sequence is that of dTTP/UTP pyrophosphatase from Anaeromyxobacter sp. (strain Fw109-5).